The sequence spans 549 residues: Probable protein kinase UbiB (549 aa).

One can recognise a Protein kinase domain in the interval 123 to 501 (DFDDIPLASA…QQKAHKSNYL (379 aa)). Residues 129–137 (LASASISQV) and Lys152 each bind ATP. The active-site Proton acceptor is Asp287. Transmembrane regions (helical) follow at residues 498 to 518 (SNYL…LINQ) and 520 to 540 (ATLW…VLGW).

This sequence belongs to the ABC1 family. UbiB subfamily.

It localises to the cell inner membrane. The protein operates within cofactor biosynthesis; ubiquinone biosynthesis [regulation]. Its function is as follows. Is probably a protein kinase regulator of UbiI activity which is involved in aerobic coenzyme Q (ubiquinone) biosynthesis. This Shewanella halifaxensis (strain HAW-EB4) protein is Probable protein kinase UbiB.